The following is a 510-amino-acid chain: Inositol-3-phosphate synthase (510 aa).

The NAD(+) site is built by glycine 70, glycine 71, asparagine 72, asparagine 73, aspartate 143, isoleucine 180, glutamine 190, arginine 193, threonine 230, alanine 231, asparagine 232, threonine 233, glycine 281, serine 282, aspartate 306, serine 309, asparagine 340, asparagine 341, aspartate 342, lysine 355, glycine 393, aspartate 394, aspartate 422, and serine 423.

It belongs to the myo-inositol 1-phosphate synthase family. The cofactor is NAD(+).

It is found in the cytoplasm. It localises to the cytosol. The protein localises to the nucleus. The enzyme catalyses D-glucose 6-phosphate = 1D-myo-inositol 3-phosphate. It functions in the pathway polyol metabolism; myo-inositol biosynthesis; myo-inositol from D-glucose 6-phosphate: step 1/2. In terms of biological role, key enzyme in myo-inositol biosynthesis pathway that catalyzes the conversion of glucose 6-phosphate to 1-myo-inositol 1-phosphate in a NAD-dependent manner. The sequence is that of Inositol-3-phosphate synthase from Sesamum indicum (Oriental sesame).